A 484-amino-acid chain; its full sequence is Trigger factor (484 aa).

A PPIase FKBP-type domain is found at glycine 165–proline 244. Positions aspartate 429 to glutamate 484 are disordered. Positions alanine 430 to alanine 440 are enriched in acidic residues. The segment covering lysine 475–glutamate 484 has biased composition (basic and acidic residues).

It belongs to the FKBP-type PPIase family. Tig subfamily.

The protein resides in the cytoplasm. The catalysed reaction is [protein]-peptidylproline (omega=180) = [protein]-peptidylproline (omega=0). Its function is as follows. Involved in protein export. Acts as a chaperone by maintaining the newly synthesized protein in an open conformation. Functions as a peptidyl-prolyl cis-trans isomerase. The chain is Trigger factor from Clavibacter michiganensis subsp. michiganensis (strain NCPPB 382).